Here is a 216-residue protein sequence, read N- to C-terminus: Uracil-DNA glycosylase (216 aa).

Aspartate 60 (proton acceptor) is an active-site residue.

This sequence belongs to the uracil-DNA glycosylase (UDG) superfamily. UNG family.

It is found in the cytoplasm. It catalyses the reaction Hydrolyzes single-stranded DNA or mismatched double-stranded DNA and polynucleotides, releasing free uracil.. Its function is as follows. Excises uracil residues from the DNA which can arise as a result of misincorporation of dUMP residues by DNA polymerase or due to deamination of cytosine. This Psychromonas ingrahamii (strain DSM 17664 / CCUG 51855 / 37) protein is Uracil-DNA glycosylase.